The following is a 630-amino-acid chain: MTQTYNADAIEVLTGLEPVRRRPGMYTDTTRPNHLGQEVIDNSVDEALAGHAKRVDVILHADQSLEVIDDGRGMPVDIHPEEGVPAVELILCRLHAGGKFSNKNYQFSGGLHGVGISVVNALSKRVEVNVRRDGQVYNIAFENGEKVQDLQVVGTCGKRNTGTSVHFWPDETFFDSPRFSVSRLTHVLKAKAVLCPGVEITFKDEINNTEQRWCYQDGLNDYLAEAVNGLPTLPEKPFIGNFAGDTEAVDWALLWLPEGGELLTESYVNLIPTMQGGTHVNGLRQGLLDAMREFCEYRNILPRGVKLSAEDIWDRCAYVLSVKMQDPQFAGQTKERLSSRQCAAFVSGVVKDAFILWLNQNVQAAELLAEMAISSAQRRMRAAKKVVRKKLTSGPALPGKLADCTAQDLNRTELFLVEGDSAGGSAKQARDREYQAIMPLKGKILNTWEVSSDEVLASQEVHDISVAIGIDPDSDDLSQLRYGKICILADADSDGLHIATLLCALFVKHFRALVKHGHVYVALPPLYRIDLGKEVYYALTEEEKEGVLEQLKRKKGKPNVQRFKGLGEMNPMQLRETTLDPNTRRLVQLTIDDEDDQRTDAMMDMLLAKKRSEDRRNWLQEKGDMAEIEV.

ATP-binding positions include tyrosine 5, asparagine 42, aspartate 69, 110 to 116, and lysine 334; that span reads GLHGVGI. A Toprim domain is found at 412–525; that stretch reads TELFLVEGDS…HGHVYVALPP (114 aa). Mg(2+) is bound by residues glutamate 418, aspartate 490, and aspartate 492.

Belongs to the type II topoisomerase family. ParE type 1 subfamily. As to quaternary structure, heterotetramer composed of ParC and ParE. It depends on Mg(2+) as a cofactor. Requires Mn(2+) as cofactor. The cofactor is Ca(2+).

The enzyme catalyses ATP-dependent breakage, passage and rejoining of double-stranded DNA.. With respect to regulation, pyrrolopyrimidines inhibit both GyrB and its paralog in topoisomerase IV (parE). Its function is as follows. Topoisomerase IV is essential for chromosome segregation; it is the principal protein responsible for decatenating newly replicated chromosomes. It relaxes supercoiled DNA. MukB stimulates the relaxation activity of topoisomerase IV and also has a modest effect on decatenation. This Escherichia coli (strain K12) protein is DNA topoisomerase 4 subunit B.